Here is a 1034-residue protein sequence, read N- to C-terminus: Isoleucine--tRNA ligase (1034 aa).

Residues 46 to 56 carry the 'HIGH' region motif; sequence PYCSGAIHLGT. A 'KMSKS' region motif is present at residues 598–602; the sequence is KMSKS. Lysine 601 provides a ligand contact to ATP.

This sequence belongs to the class-I aminoacyl-tRNA synthetase family. IleS type 2 subfamily. As to quaternary structure, monomer. It depends on Zn(2+) as a cofactor.

The protein resides in the cytoplasm. It catalyses the reaction tRNA(Ile) + L-isoleucine + ATP = L-isoleucyl-tRNA(Ile) + AMP + diphosphate. In terms of biological role, catalyzes the attachment of isoleucine to tRNA(Ile). As IleRS can inadvertently accommodate and process structurally similar amino acids such as valine, to avoid such errors it has two additional distinct tRNA(Ile)-dependent editing activities. One activity is designated as 'pretransfer' editing and involves the hydrolysis of activated Val-AMP. The other activity is designated 'posttransfer' editing and involves deacylation of mischarged Val-tRNA(Ile). This chain is Isoleucine--tRNA ligase, found in Methanococcus maripaludis (strain DSM 14266 / JCM 13030 / NBRC 101832 / S2 / LL).